The sequence spans 617 residues: MSPMARTAPVPAATDPAIIRNFCIIAHIDHGKSTLADRMLQYTGVVQSRDMKAQYLDRMDIERERGITIKSQAVRMPWEVDGTSYALNMIDTPGHVDFTYEVSRSLAACEGAVLLVDAAQGIEAQTLANLYLAMENNLTIIPVLNKIDLPAAQPEKYAEELANLIGGDPDEVLRVSGKTGMGVEVLLDKIVRDLPAPVGDPDAPARAMIFDSVYDTYRGVVTYVRVVDGMLHPRERIQMMSTRATHELLEIGVSSPEPTPSKGLGVGEVGYLITGVKDVRLSKVGDTVTNLAKPASQSLPGYADAKPMVFSGLYPLDGTDYPVLRDALEKLMLNDAALVYQPETSAALGFGFRVGFLGLLHLEITRERLEREYKLDLISTAPNVEYEVTLEDKRVVHVTNPSEYPTGKIAEVREPMVSATILAPNEFVGAIMELCQSRRGVMGGMDYLSEDRVEIRYRLPLAEIVFDFFDILKSKTRGYGSLDWKADGDQVADLVKVDIMLQGEQVDAFSAITHRDKAYAYGVMMTGKLRELIPRQQFEVPIQAAIGSRIIARESIRAIRKDVLAKCYGGDITRKRKLLEKQKEGKKRMKMVGRVEVPQEAFIAALTTDESKDKAKK.

One can recognise a tr-type G domain in the interval 17–198; that stretch reads AIIRNFCIIA…KIVRDLPAPV (182 aa). GTP-binding positions include 29–34 and 145–148; these read DHGKST and NKID.

This sequence belongs to the TRAFAC class translation factor GTPase superfamily. Classic translation factor GTPase family. LepA subfamily.

The protein resides in the cell membrane. It catalyses the reaction GTP + H2O = GDP + phosphate + H(+). In terms of biological role, required for accurate and efficient protein synthesis under certain stress conditions. May act as a fidelity factor of the translation reaction, by catalyzing a one-codon backward translocation of tRNAs on improperly translocated ribosomes. Back-translocation proceeds from a post-translocation (POST) complex to a pre-translocation (PRE) complex, thus giving elongation factor G a second chance to translocate the tRNAs correctly. Binds to ribosomes in a GTP-dependent manner. This is Elongation factor 4 from Arthrobacter sp. (strain FB24).